A 1066-amino-acid chain; its full sequence is Kinesin-like protein Klp61F (1066 aa).

Residues 19–356 (NIQVYVRVRP…LEYAHRAKNI (338 aa)) form the Kinesin motor domain. Position 103-110 (103-110 (GQTGTGKT)) interacts with ATP. Residues 362–462 (VNQKLTKKTV…KTEENLLNTK (101 aa)) are a coiled coil. At Thr520 the chain carries Phosphothreonine. Coiled coils occupy residues 540 to 569 (DRMQ…QLSQ), 639 to 738 (LMSK…QIKN), 808 to 875 (CSML…LITE), and 889 to 918 (DLVQ…ELVR). Position 933 is a phosphothreonine (Thr933). The residue at position 949 (Ser949) is a Phosphoserine. The segment covering 990–1002 (ELSETETIMNSTP) has biased composition (polar residues). Disordered regions lie at residues 990–1009 (ELSE…VDGV) and 1016–1066 (GTTR…ENVA). Over residues 1033 to 1051 (GGKRSSSLSRSLTPSKTSP) the composition is skewed to low complexity. Position 1043 is a phosphoserine (Ser1043). Position 1045 is a phosphothreonine (Thr1045). Phosphoserine is present on residues Ser1050 and Ser1054.

It belongs to the TRAFAC class myosin-kinesin ATPase superfamily. Kinesin family. BimC subfamily. In terms of assembly, homotetramer. Consists of two pairs of polypeptides associated by coiled-coil interactions to form two homodimers. The homodimers are linked by lateral interactions between their coiled-coil regions to form a bipolar homotetramer consisting of a central rod with two motor domains projecting from either end. Parallel coiled coils extend from each pair of motor heads, switch to two antiparallel coiled coils in the central region and then back to parallel coiled coils. Interacts with Wee1. Phosphorylation is required for localization to mitotic spindles. Phosphorylation of Thr-933 during mitosis controls association with the spindle apparatus. Phosphorylated in vitro by Wee1.

The protein resides in the cytoplasm. It localises to the cytoskeleton. It is found in the spindle. Its subcellular location is the spindle pole. Functionally, important role in mitotic dividing cells. Microtubule motor required for spindle body separation. Slow plus-end directed microtubule motor capable of cross-linking and sliding apart antiparallel microtubules, thereby pushing apart the associated spindle poles during spindle assembly and function. Forms cross-links between microtubules within interpolar microtubule bundles. Contributes to the length of the metaphase spindle, maintains the prometaphase spindle by antagonizing Ncd, drives anaphase B, and also contributes to normal chromosome congression, kinetochore spacing, and anaphase A rates. Displays microtubule-stimulated ATPase activity. Required for normal fusome organization. Required in non-mitotic cells for transport of secretory proteins from the Golgi complex to the cell surface. The sequence is that of Kinesin-like protein Klp61F from Drosophila melanogaster (Fruit fly).